A 156-amino-acid polypeptide reads, in one-letter code: SsrA-binding protein (156 aa).

The disordered stretch occupies residues 134 to 156; that stretch reads RQTLREQQDKRESLRELRERNRR.

It belongs to the SmpB family.

It is found in the cytoplasm. Functionally, required for rescue of stalled ribosomes mediated by trans-translation. Binds to transfer-messenger RNA (tmRNA), required for stable association of tmRNA with ribosomes. tmRNA and SmpB together mimic tRNA shape, replacing the anticodon stem-loop with SmpB. tmRNA is encoded by the ssrA gene; the 2 termini fold to resemble tRNA(Ala) and it encodes a 'tag peptide', a short internal open reading frame. During trans-translation Ala-aminoacylated tmRNA acts like a tRNA, entering the A-site of stalled ribosomes, displacing the stalled mRNA. The ribosome then switches to translate the ORF on the tmRNA; the nascent peptide is terminated with the 'tag peptide' encoded by the tmRNA and targeted for degradation. The ribosome is freed to recommence translation, which seems to be the essential function of trans-translation. The protein is SsrA-binding protein of Paenarthrobacter aurescens (strain TC1).